Consider the following 445-residue polypeptide: Methionine aminopeptidase 2 (445 aa).

The disordered stretch occupies residues 1-76; it reads MAAQVASGVG…KKKCTSKVQT (76 aa). A compositionally biased stretch (basic residues) spans 57–71; the sequence is AKKKKKKTKKKKKCT. Residue His195 participates in substrate binding. A divalent metal cation is bound by residues Asp215, Asp226, and His295. His303 contributes to the substrate binding site. A divalent metal cation-binding residues include Glu331 and Glu426.

It belongs to the peptidase M24A family. Methionine aminopeptidase eukaryotic type 2 subfamily. Co(2+) is required as a cofactor. Requires Zn(2+) as cofactor. It depends on Mn(2+) as a cofactor. The cofactor is Fe(2+).

The protein localises to the cytoplasm. It catalyses the reaction Release of N-terminal amino acids, preferentially methionine, from peptides and arylamides.. In terms of biological role, cotranslationally removes the N-terminal methionine from nascent proteins. The N-terminal methionine is often cleaved when the second residue in the primary sequence is small and uncharged (Met-Ala-, Cys, Gly, Pro, Ser, Thr, or Val). The polypeptide is Methionine aminopeptidase 2 (Paracoccidioides lutzii (strain ATCC MYA-826 / Pb01) (Paracoccidioides brasiliensis)).